The chain runs to 578 residues: Lysine--tRNA ligase (578 aa).

Residues E414 and E421 each coordinate Mg(2+).

Belongs to the class-II aminoacyl-tRNA synthetase family. As to quaternary structure, homodimer. Mg(2+) is required as a cofactor.

The protein resides in the cytoplasm. It carries out the reaction tRNA(Lys) + L-lysine + ATP = L-lysyl-tRNA(Lys) + AMP + diphosphate. In Porphyromonas gingivalis (strain ATCC 33277 / DSM 20709 / CIP 103683 / JCM 12257 / NCTC 11834 / 2561), this protein is Lysine--tRNA ligase.